Consider the following 595-residue polypeptide: Protein LUTEIN DEFICIENT 5, chloroplastic (595 aa).

The transit peptide at 1–28 directs the protein to the chloroplast; that stretch reads MAMAFPLSYTPTITVKPVTYSRRSNFVV. C516 contributes to the heme binding site.

It belongs to the cytochrome P450 family. Heme serves as cofactor.

It localises to the plastid. The protein localises to the chloroplast. In terms of biological role, heme-containing cytochrome P450 involved in the biosynthesis of xanthophylls. Specific for beta-ring hydroxylation of alpha- and beta-carotene. Also has a low activity toward the epsilon-rings of alpha-carotene. The beta-ring of alpha-carotene is the preferred substrate in planta. The polypeptide is Protein LUTEIN DEFICIENT 5, chloroplastic (CYP97A3) (Arabidopsis thaliana (Mouse-ear cress)).